Reading from the N-terminus, the 166-residue chain is MAVTMFRAALRGWRTDVQRGCGLRLLSQTQGPPDYPSFVESVDEYQFVERLLPATRIPDPPKHEHYPTPSGWQPPRDPPPNLPYFVRRSRMHNVPVYKDITHGNRQMTVIRKVEGDIWALQKDVEDFLSPLLGKTPVTQVNEVTGTLRIKGYFDQELKAWLLEKGF.

The segment at 56 to 78 (RIPDPPKHEHYPTPSGWQPPRDP) is disordered.

Belongs to the mitochondrion-specific ribosomal protein mL49 family. Interacts with OXA1L.

Its subcellular location is the mitochondrion. In Macaca fascicularis (Crab-eating macaque), this protein is Large ribosomal subunit protein mL49 (MRPL49).